The primary structure comprises 354 residues: Holliday junction branch migration complex subunit RuvB (354 aa).

Residues 4-191 (TDKLAAPARV…FGIVARLEFY (188 aa)) form a large ATPase domain (RuvB-L) region. Residues Leu-30, Arg-31, Gly-72, Lys-75, Thr-76, Thr-77, 138-140 (EDY), Arg-181, Tyr-191, and Arg-228 contribute to the ATP site. Thr-76 contacts Mg(2+). The interval 192–262 (TAEELARIVT…MADAALAMLD (71 aa)) is small ATPAse domain (RuvB-S). Residues 265 to 354 (RVGFDLMDRK…GDAGELFGDA (90 aa)) are head domain (RuvB-H). Residues Arg-301, Arg-320, and Arg-325 each coordinate DNA.

It belongs to the RuvB family. In terms of assembly, homohexamer. Forms an RuvA(8)-RuvB(12)-Holliday junction (HJ) complex. HJ DNA is sandwiched between 2 RuvA tetramers; dsDNA enters through RuvA and exits via RuvB. An RuvB hexamer assembles on each DNA strand where it exits the tetramer. Each RuvB hexamer is contacted by two RuvA subunits (via domain III) on 2 adjacent RuvB subunits; this complex drives branch migration. In the full resolvosome a probable DNA-RuvA(4)-RuvB(12)-RuvC(2) complex forms which resolves the HJ.

It localises to the cytoplasm. It carries out the reaction ATP + H2O = ADP + phosphate + H(+). Its function is as follows. The RuvA-RuvB-RuvC complex processes Holliday junction (HJ) DNA during genetic recombination and DNA repair, while the RuvA-RuvB complex plays an important role in the rescue of blocked DNA replication forks via replication fork reversal (RFR). RuvA specifically binds to HJ cruciform DNA, conferring on it an open structure. The RuvB hexamer acts as an ATP-dependent pump, pulling dsDNA into and through the RuvAB complex. RuvB forms 2 homohexamers on either side of HJ DNA bound by 1 or 2 RuvA tetramers; 4 subunits per hexamer contact DNA at a time. Coordinated motions by a converter formed by DNA-disengaged RuvB subunits stimulates ATP hydrolysis and nucleotide exchange. Immobilization of the converter enables RuvB to convert the ATP-contained energy into a lever motion, pulling 2 nucleotides of DNA out of the RuvA tetramer per ATP hydrolyzed, thus driving DNA branch migration. The RuvB motors rotate together with the DNA substrate, which together with the progressing nucleotide cycle form the mechanistic basis for DNA recombination by continuous HJ branch migration. Branch migration allows RuvC to scan DNA until it finds its consensus sequence, where it cleaves and resolves cruciform DNA. This chain is Holliday junction branch migration complex subunit RuvB, found in Cupriavidus taiwanensis (strain DSM 17343 / BCRC 17206 / CCUG 44338 / CIP 107171 / LMG 19424 / R1) (Ralstonia taiwanensis (strain LMG 19424)).